A 109-amino-acid polypeptide reads, in one-letter code: uncharacterized protein (109 aa).

It localises to the mitochondrion. This is an uncharacterized protein from Saccharomyces cerevisiae (strain ATCC 204508 / S288c) (Baker's yeast).